Consider the following 100-residue polypeptide: Large ribosomal subunit protein bL27 (100 aa).

Residues 1–13 constitute a propeptide that is removed on maturation; that stretch reads MNKLYWLTDLQLF. Residues 17-39 form a disordered region; that stretch reads KGVGSSKNGRDSNPKYLGAKLGD.

The protein belongs to the bacterial ribosomal protein bL27 family. In terms of processing, the N-terminus is cleaved by ribosomal processing cysteine protease Prp.

The polypeptide is Large ribosomal subunit protein bL27 (Ureaplasma parvum serovar 3 (strain ATCC 700970)).